The sequence spans 465 residues: GDNF family receptor alpha-2 (465 aa).

The N-terminal stretch at 1–21 (MILANAFCIVLFVDETLRSLA) is a signal peptide. 14 disulfides stabilise this stretch: cysteine 40/cysteine 93, cysteine 47/cysteine 53, cysteine 63/cysteine 78, cysteine 95/cysteine 105, cysteine 159/cysteine 220, cysteine 166/cysteine 172, cysteine 183/cysteine 198, cysteine 193/cysteine 239, cysteine 222/cysteine 227, cysteine 249/cysteine 321, cysteine 256/cysteine 262, cysteine 273/cysteine 291, cysteine 283/cysteine 345, and cysteine 323/cysteine 333. 3 N-linked (GlcNAc...) asparagine glycosylation sites follow: asparagine 355, asparagine 387, and asparagine 412. Serine 445 carries the GPI-anchor amidated serine lipid modification. The propeptide at 446–465 (RHRAARILPAVPIVLLKLLL) is removed in mature form.

It belongs to the GDNFR family. In terms of assembly, interacts with NRTN ligand and RET: forms a 2:2:2 ternary complex composed of NRTN ligand, GFRA2 and RET receptor.

It localises to the cell membrane. In terms of biological role, receptor for neurturin (NRTN), a growth factor that supports the survival of sympathetic neurons. NRTN-binding leads to autophosphorylation and activation of the RET receptor. This is GDNF family receptor alpha-2 (GFRA2) from Gallus gallus (Chicken).